Consider the following 299-residue polypeptide: Oxygen-dependent coproporphyrinogen-III oxidase (299 aa).

Residue S92 coordinates substrate. H96 and H106 together coordinate a divalent metal cation. H106 acts as the Proton donor in catalysis. A substrate-binding site is contributed by 108-110 (NVR). The a divalent metal cation site is built by H145 and H175. Residues 240 to 275 (YVEFNLVWDRGTLFGLQTGGRTESILMSMPPLVRWE) form an important for dimerization region. 258–260 (GGR) contributes to the substrate binding site.

It belongs to the aerobic coproporphyrinogen-III oxidase family. As to quaternary structure, homodimer. A divalent metal cation serves as cofactor.

Its subcellular location is the cytoplasm. The catalysed reaction is coproporphyrinogen III + O2 + 2 H(+) = protoporphyrinogen IX + 2 CO2 + 2 H2O. It participates in porphyrin-containing compound metabolism; protoporphyrin-IX biosynthesis; protoporphyrinogen-IX from coproporphyrinogen-III (O2 route): step 1/1. Its function is as follows. Involved in the heme biosynthesis. Catalyzes the aerobic oxidative decarboxylation of propionate groups of rings A and B of coproporphyrinogen-III to yield the vinyl groups in protoporphyrinogen-IX. The sequence is that of Oxygen-dependent coproporphyrinogen-III oxidase from Salmonella dublin (strain CT_02021853).